The chain runs to 234 residues: Ribose-5-phosphate isomerase A (234 aa).

Residues 28–31 (TGST), 85–88 (DGAD), and 98–101 (KGLG) each bind substrate. Glu107 (proton acceptor) is an active-site residue. Position 125 (Lys125) interacts with substrate.

Belongs to the ribose 5-phosphate isomerase family. In terms of assembly, homodimer.

It carries out the reaction aldehydo-D-ribose 5-phosphate = D-ribulose 5-phosphate. It functions in the pathway carbohydrate degradation; pentose phosphate pathway; D-ribose 5-phosphate from D-ribulose 5-phosphate (non-oxidative stage): step 1/1. Functionally, catalyzes the reversible conversion of ribose-5-phosphate to ribulose 5-phosphate. This Roseiflexus castenholzii (strain DSM 13941 / HLO8) protein is Ribose-5-phosphate isomerase A.